The chain runs to 97 residues: Exodeoxyribonuclease 7 small subunit (97 aa).

Residues 1 to 22 (MAKTASPGATPPDNGTEPLPDN) form a disordered region.

The protein belongs to the XseB family. Heterooligomer composed of large and small subunits.

It localises to the cytoplasm. The enzyme catalyses Exonucleolytic cleavage in either 5'- to 3'- or 3'- to 5'-direction to yield nucleoside 5'-phosphates.. Its function is as follows. Bidirectionally degrades single-stranded DNA into large acid-insoluble oligonucleotides, which are then degraded further into small acid-soluble oligonucleotides. This chain is Exodeoxyribonuclease 7 small subunit, found in Burkholderia ambifaria (strain MC40-6).